The primary structure comprises 504 residues: Pup--protein ligase (504 aa).

Mg(2+) is bound at residue Glu30. Arg74 contributes to the ATP binding site. Residue Tyr76 participates in Mg(2+) binding. The Proton acceptor role is filled by Asp78. Glu84 is a Mg(2+) binding site. Residues Thr87 and Trp459 each contribute to the ATP site.

This sequence belongs to the Pup ligase/Pup deamidase family. Pup-conjugating enzyme subfamily.

The enzyme catalyses ATP + [prokaryotic ubiquitin-like protein]-L-glutamate + [protein]-L-lysine = ADP + phosphate + N(6)-([prokaryotic ubiquitin-like protein]-gamma-L-glutamyl)-[protein]-L-lysine.. Its pathway is protein degradation; proteasomal Pup-dependent pathway. It participates in protein modification; protein pupylation. Functionally, catalyzes the covalent attachment of the prokaryotic ubiquitin-like protein modifier Pup to the proteasomal substrate proteins, thereby targeting them for proteasomal degradation. This tagging system is termed pupylation. The ligation reaction involves the side-chain carboxylate of the C-terminal glutamate of Pup and the side-chain amino group of a substrate lysine. The protein is Pup--protein ligase of Corynebacterium urealyticum (strain ATCC 43042 / DSM 7109).